A 375-amino-acid polypeptide reads, in one-letter code: Putrescine N-methyltransferase 1 (375 aa).

Composition is skewed to polar residues over residues 24-50 and 57-77; these read HQNG…QNGT and HQNG…GNEL. The interval 24–77 is disordered; it reads HQNGTSEHLNGYQNGTSKHQNGHQNGTFEHRNGHQNGTSEQQNGTISHDNGNEL. One can recognise a PABS domain in the interval 86 to 323; the sequence is PGWFSEFSAL…GVIGYMLCST (238 aa). S-adenosyl-L-methionine is bound by residues Gln117, Glu192, and 223–224; that span reads DG. Residue Asp242 is the Proton acceptor of the active site. Tyr311 is an S-adenosyl-L-methionine binding site.

Belongs to the class I-like SAM-binding methyltransferase superfamily. Putrescine methyltransferase family. In terms of tissue distribution, predominantly expressed in roots.

It catalyses the reaction putrescine + S-adenosyl-L-methionine = N-methylputrescine + S-adenosyl-L-homocysteine + H(+). It functions in the pathway alkaloid biosynthesis; nicotine biosynthesis. In terms of biological role, involved in the biosynthesis of pyridine alkaloid natural products, leading mainly to the production of anabasine, anatabine, nicotine and nornicotine, effective deterrents against herbivores with antiparasitic and pesticide properties (neurotoxins); nornicotine serves as the precursor in the synthesis of the carcinogen compound N'-nitrosonornicotine (NNN). Methyltransferase that mediates the conversion of putrescine to N-methylputrescine. Promotes leaves ripening. The protein is Putrescine N-methyltransferase 1 of Nicotiana tabacum (Common tobacco).